We begin with the raw amino-acid sequence, 262 residues long: Short-chain Z-isoprenyl diphosphate synthase (262 aa).

Aspartate 40 is an active-site residue. Mg(2+) is bound at residue aspartate 40. Residues 41–44, tryptophan 45, and 86–88 each bind substrate; these read GNRR and STE. Asparagine 89 acts as the Proton acceptor in catalysis. Substrate contacts are provided by residues arginine 92, arginine 211, and 217 to 219; that span reads RLS. A Mg(2+)-binding site is contributed by glutamate 230.

Belongs to the UPP synthase family. Z-FPP synthase subfamily. The cofactor is Mg(2+).

The enzyme catalyses isopentenyl diphosphate + (2E)-geranyl diphosphate = (2Z,6E)-farnesyl diphosphate + diphosphate. It participates in phospholipid metabolism; decaprenyl phosphate biosynthesis. In terms of biological role, generates Z-farnesyl diphosphate (Z-FPP) from isopentenyl pyrophosphate (IPP). Z-FPP is the precursor of decaprenyl diphosphate, which has a central role in the biosynthesis of the mycobacterial cell wall. This is Short-chain Z-isoprenyl diphosphate synthase from Mycobacterium leprae (strain TN).